The primary structure comprises 396 residues: Probable sugar efflux transporter (396 aa).

Helical transmembrane passes span 15–35 (VLIM…PVAM), 51–71 (GLMM…AMLA), 84–104 (LFII…FWIL), 109–129 (MCIA…VMRI), 137–157 (QALG…LPIG), 168–188 (VTFG…IRLL), 209–229 (PLLL…FTAY), 245–265 (NFAT…SLLF), 273–293 (PTKF…LLLF), 297–317 (TIIA…CIGL), 333–353 (VATA…ALFG), and 365–385 (IGYT…TTHL).

It belongs to the major facilitator superfamily. SotB (TC 2.A.1.2) family.

The protein localises to the cell inner membrane. In terms of biological role, involved in the efflux of sugars. The physiological role may be the reduction of the intracellular concentration of toxic sugars or sugar metabolites. This chain is Probable sugar efflux transporter, found in Haemophilus influenzae (strain ATCC 51907 / DSM 11121 / KW20 / Rd).